We begin with the raw amino-acid sequence, 37 residues long: Potassium channel toxin alpha-KTx 4.8 (37 aa).

2 cysteine pairs are disulfide-bonded: Cys-13–Cys-33 and Cys-17–Cys-35.

It belongs to the short scorpion toxin superfamily. Potassium channel inhibitor family. Alpha-KTx 04 subfamily. In terms of tissue distribution, expressed by the venom gland.

It localises to the secreted. In terms of biological role, reversible blocker of voltage-gated potassium channel Kv1.2/KCNA2 (Kd=65 nM) and calcium-activated potassium channels KCa2.2/KCNN2 (Kd=575 nM) and KCa3.1/KCNN4 (Kd=59 nM). In Centruroides margaritatus (Central American bark Scorpion), this protein is Potassium channel toxin alpha-KTx 4.8.